The chain runs to 362 residues: MEVFLEMLLTAVVALLFSFLLAKLVSVATVENDLSSDQPLKPEIGVGVTEDVRFGMKMDARVLESQRNFQVVDENVELVDRFLSEEADRVYEVDEAVTGNAKICGDREAESSAAASSENYVIAEEVILVRGQDEQSDSAEAESISSVSPENVVAEEIKSQGQEEVTELGRSGCVENEESGGDVLVAESEEVRVEKSSNMVEESDAEAENEEKTELTIEEDDDWEGIERSELEKAFAAAVNLLEESGKAEEIGAEAKMELFGLHKIATEGSCREAQPMAVMISARAKWNAWQKLGNMSQEEAMEQYLALVSKEIPGLTKAGHTVGKMSEMETSVGLPPNSGSLEDPTNLVTTGVDESSKNGIP.

An N-terminal signal peptide occupies residues 1-22 (MEVFLEMLLTAVVALLFSFLLA). Disordered stretches follow at residues 132–151 (QDEQ…SPEN) and 193–214 (VEKS…EKTE). A coiled-coil region spans residues 192–221 (RVEKSSNMVEESDAEAENEEKTELTIEEDD). The ACB domain occupies 231–318 (LEKAFAAAVN…VSKEIPGLTK (88 aa)). Residues 260–264 (FGLHK), lysine 286, and tyrosine 305 each bind an acyl-CoA. Residues 329 to 362 (METSVGLPPNSGSLEDPTNLVTTGVDESSKNGIP) are disordered.

Belongs to the ACBP family. As to expression, expressed in roots, stems, leaves, flowers and siliques.

It localises to the secreted. It is found in the extracellular space. In terms of biological role, binds medium- and long-chain acyl-CoA esters with very high affinity. Can interact in vitro with arachidonyl-CoA, barely with oleoyl-CoA, but not with palmitoyl-CoA. The polypeptide is Acyl-CoA-binding domain-containing protein 3 (ACBP3) (Arabidopsis thaliana (Mouse-ear cress)).